Here is a 134-residue protein sequence, read N- to C-terminus: ATP synthase epsilon chain, chloroplastic (134 aa).

It belongs to the ATPase epsilon chain family. In terms of assembly, F-type ATPases have 2 components, CF(1) - the catalytic core - and CF(0) - the membrane proton channel. CF(1) has five subunits: alpha(3), beta(3), gamma(1), delta(1), epsilon(1). CF(0) has three main subunits: a, b and c.

Its subcellular location is the plastid. The protein resides in the chloroplast thylakoid membrane. Functionally, produces ATP from ADP in the presence of a proton gradient across the membrane. The sequence is that of ATP synthase epsilon chain, chloroplastic from Liriodendron tulipifera (Tuliptree).